The following is a 500-amino-acid chain: MASTPLLYVLVIILSAVYLLRRRSNPLYAIPAVGPSLPLLSYIGALRFTRHAHEMLQEGYIKYKGSAFRLAQLDRWVVVLCGPKMNEELQRMPDDQVSFLDAAEDLVQTKYTIAKNVIENPIHISVMRGPLTRNLAPLLLDVIDEINIGVEEHIPTRGDEWVSVPGLATMTQIVSRASNRVFVGLPMCRDPEYFKIISNFPRDVAKGRFILSITPTFLKPIIGPLLPWSRRTVRQYSALMKPIIEERQRLLLEHRDPHDPDRPNDFMTWLIEEGRAVDQPVDLLVNALLSSNFVAIHTSSISVTHALYNLAAYPEYQQPVRDELVEVIKAEGWTKQAFGKMWKLDSFMRESQRMFGISAISVIRKALKDVTLSNGTVIPAGTLIAVAAEGTHYDEGSYDNPYIFNPFRFSDMREDEGERIKHQYVSTSSEYVSFGHGKHACPGRFFASNELKAILSRLILDFDMKFGGDGHRPPNQWFGSSIIPSQTANVMFRKRPDAGL.

The next 2 membrane-spanning stretches (helical) occupy residues 1–21 and 26–46; these read MAST…YLLR and PLYA…IGAL. A glycan (N-linked (GlcNAc...) asparagine) is linked at Asn374. Cys441 is a heme binding site.

This sequence belongs to the cytochrome P450 family. It depends on heme as a cofactor.

It is found in the membrane. Its pathway is secondary metabolite biosynthesis. Its function is as follows. Cytochrome P450 monooxygenase that is able to use testosterone as a substrate for oxidation. The protein is Cytochrome P450 monooxygenase 103 of Postia placenta (strain ATCC 44394 / Madison 698-R) (Brown rot fungus).